Consider the following 75-residue polypeptide: Probable [Fe-S]-dependent transcriptional repressor (75 aa).

Iron-sulfur cluster is bound by residues cysteine 55, cysteine 60, cysteine 63, and cysteine 72.

The protein belongs to the FeoC family.

Functionally, may function as a transcriptional regulator that controls feoABC expression. In Serratia marcescens, this protein is Probable [Fe-S]-dependent transcriptional repressor.